Here is a 325-residue protein sequence, read N- to C-terminus: Malate dehydrogenase (325 aa).

An NAD(+)-binding site is contributed by 11–17 (GAAGHVS). Substrate-binding residues include Arg-92 and Arg-98. Residues Asn-105, Gln-112, and 129 to 131 (VGN) contribute to the NAD(+) site. 2 residues coordinate substrate: Asn-131 and Arg-162. The active-site Proton acceptor is His-187.

It belongs to the LDH/MDH superfamily. MDH type 2 family.

It carries out the reaction (S)-malate + NAD(+) = oxaloacetate + NADH + H(+). Catalyzes the reversible oxidation of malate to oxaloacetate. In Desulfotalea psychrophila (strain LSv54 / DSM 12343), this protein is Malate dehydrogenase.